Consider the following 200-residue polypeptide: Lipopolysaccharide core heptose(II)-phosphate phosphatase (200 aa).

The N-terminal stretch at 1 to 25 (MLAFCRSSLKSKKYFIILLALAAIA) is a signal peptide.

This sequence belongs to the phosphoglycerate mutase family. Ais subfamily.

It is found in the periplasm. Its pathway is bacterial outer membrane biogenesis; lipopolysaccharide metabolism. Its function is as follows. Catalyzes the dephosphorylation of heptose(II) of the outer membrane lipopolysaccharide core. The chain is Lipopolysaccharide core heptose(II)-phosphate phosphatase from Escherichia coli O157:H7 (strain EC4115 / EHEC).